The primary structure comprises 106 residues: Putative cytochrome c oxidase subunit 7A3, mitochondrial (106 aa).

The transit peptide at 1–23 (MLWNLLALHQIGQRTISTASHRH) directs the protein to the mitochondrion.

Belongs to the cytochrome c oxidase VIIa family.

It localises to the mitochondrion inner membrane. This chain is Putative cytochrome c oxidase subunit 7A3, mitochondrial (COX7A2P2), found in Homo sapiens (Human).